A 105-amino-acid polypeptide reads, in one-letter code: Large ribosomal subunit protein bL21 (105 aa).

It belongs to the bacterial ribosomal protein bL21 family. Part of the 50S ribosomal subunit. Contacts protein L20.

Functionally, this protein binds to 23S rRNA in the presence of protein L20. This Rickettsia peacockii (strain Rustic) protein is Large ribosomal subunit protein bL21.